The sequence spans 335 residues: GTPase Obg (335 aa).

An Obg domain is found at 1 to 159 (MKFVDSAKIS…IELEMELKLM (159 aa)). The OBG-type G domain maps to 160–323 (ADVGLVGFPN…LKDELWRQIS (164 aa)). GTP-binding positions include 166–173 (GFPNAGKS), 191–195 (FTTLV), 213–216 (DIPG), 280–283 (TKMD), and 304–306 (SSV). Positions 173 and 193 each coordinate Mg(2+).

This sequence belongs to the TRAFAC class OBG-HflX-like GTPase superfamily. OBG GTPase family. As to quaternary structure, monomer. Mg(2+) is required as a cofactor.

It is found in the cytoplasm. Functionally, an essential GTPase which binds GTP, GDP and possibly (p)ppGpp with moderate affinity, with high nucleotide exchange rates and a fairly low GTP hydrolysis rate. Plays a role in control of the cell cycle, stress response, ribosome biogenesis and in those bacteria that undergo differentiation, in morphogenesis control. In Chlorobaculum parvum (strain DSM 263 / NCIMB 8327) (Chlorobium vibrioforme subsp. thiosulfatophilum), this protein is GTPase Obg.